The sequence spans 123 residues: Small ribosomal subunit protein uS12c (123 aa).

Belongs to the universal ribosomal protein uS12 family. As to quaternary structure, part of the 30S ribosomal subunit.

The protein resides in the plastid. It is found in the chloroplast. Functionally, with S4 and S5 plays an important role in translational accuracy. Located at the interface of the 30S and 50S subunits. This chain is Small ribosomal subunit protein uS12c (rps12), found in Chlorella vulgaris (Green alga).